The primary structure comprises 332 residues: tRNA dimethylallyltransferase (332 aa).

ATP is bound at residue 17 to 24; it reads GPTCSGKS. 19–24 serves as a coordination point for substrate; it reads TCSGKS. Interaction with substrate tRNA stretches follow at residues 42–45 and 166–170; these read DSMQ and QRISR.

Belongs to the IPP transferase family. In terms of assembly, monomer. The cofactor is Mg(2+).

The enzyme catalyses adenosine(37) in tRNA + dimethylallyl diphosphate = N(6)-dimethylallyladenosine(37) in tRNA + diphosphate. In terms of biological role, catalyzes the transfer of a dimethylallyl group onto the adenine at position 37 in tRNAs that read codons beginning with uridine, leading to the formation of N6-(dimethylallyl)adenosine (i(6)A). This is tRNA dimethylallyltransferase from Gluconobacter oxydans (strain 621H) (Gluconobacter suboxydans).